Here is a 258-residue protein sequence, read N- to C-terminus: Short-chain dehydrogenase/reductase aba4 (258 aa).

NADP(+) is bound by residues Ile-20, Asp-66, and Lys-130. Active-site proton donor residues include Ser-146 and Tyr-160. Positions 160, 164, 193, and 195 each coordinate NADP(+). Lys-164 (lowers pKa of active site Tyr) is an active-site residue.

Belongs to the short-chain dehydrogenases/reductases (SDR) family.

It participates in hormone biosynthesis. In terms of biological role, short-chain dehydrogenase/reductase; part of the gene cluster that mediates the biosynthesis of abscisic acid (ABA), a phytohormone that acts antagonistically toward salicylic acid (SA), jasmonic acid (JA) and ethylene (ETH) signaling, to impede plant defense responses. The first step of the pathway catalyzes the reaction from farnesyl diphosphate to alpha-ionylideneethane performed by the alpha-ionylideneethane synthase aba3 via a three-step reaction mechanism involving 2 neutral intermediates, beta-farnesene and allofarnesene. The cytochrome P450 monooxygenase aba1 might then be involved in the conversion of alpha-ionylideneethane to alpha-ionylideneacetic acid. Alpha-ionylideneacetic acid is further converted to abscisic acid in 2 steps involving the cytochrome P450 monooxygenase aba2 and the short-chain dehydrogenase/reductase aba4, via the intermediates 1'-deoxy-ABA or 1',4'-trans-diol-ABA, depending on the order of action of these 2 enzymes. Aba2 is responsible for the hydroxylation of carbon atom C-1' and aba4 might be involved in the oxidation of the C-4' carbon atom. In Botryotinia fuckeliana (Noble rot fungus), this protein is Short-chain dehydrogenase/reductase aba4.